The following is a 299-amino-acid chain: Cysteine synthase B (299 aa).

The residue at position 40 (lysine 40) is an N6-(pyridoxal phosphate)lysine. Pyridoxal 5'-phosphate contacts are provided by residues asparagine 70, 174–178 (GTGGT), and serine 261.

The protein belongs to the cysteine synthase/cystathionine beta-synthase family. Pyridoxal 5'-phosphate is required as a cofactor.

The catalysed reaction is O-acetyl-L-serine + hydrogen sulfide = L-cysteine + acetate. It participates in amino-acid biosynthesis; L-cysteine biosynthesis; L-cysteine from L-serine: step 2/2. This chain is Cysteine synthase B (cysM), found in Campylobacter jejuni subsp. jejuni serotype O:2 (strain ATCC 700819 / NCTC 11168).